We begin with the raw amino-acid sequence, 223 residues long: Ribonuclease S-2 (223 aa).

The signal sequence occupies residues 1–22; it reads MAKSQLVSALFVFFFSLSPIYG. C38 and C44 form a disulfide bridge. Residue N51 is glycosylated (N-linked (GlcNAc...) asparagine). The Proton donor role is filled by H55. RNA-binding positions include H55 and 94–95; that span reads QL. Disulfide bonds link C71-C119, C178-C211, and C194-C205. Q112 is a catalytic residue. Residue 115-116 coordinates RNA; it reads KH. H116 functions as the Proton acceptor in the catalytic mechanism.

Belongs to the RNase T2 family. In terms of tissue distribution, pistil.

The protein localises to the secreted. It localises to the extracellular space. The catalysed reaction is a ribonucleotidyl-ribonucleotide-RNA + H2O = a 3'-end 3'-phospho-ribonucleotide-RNA + a 5'-end dephospho-ribonucleoside-RNA + H(+). In terms of biological role, self-incompatibility (SI) is the inherited ability of a flowering plant to prevent self-fertilization by discriminating between self and non-self pollen during pollination. In many species of the Solanaceae, self-incompatibility is controlled by the single, multiallelic locus S. This stylar glycoprotein is associated with expression of self-incompatibility in potato. The chain is Ribonuclease S-2 from Solanum tuberosum (Potato).